Here is a 374-residue protein sequence, read N- to C-terminus: Homeobox protein knotted-1-like 13 (374 aa).

The tract at residues 214–242 (TGASPGEGTGATMSDGEDDQADSEANMYD) is disordered. Residues 270–290 (ELKHELKQGYKEKLIDIREEI) form the ELK domain. A DNA-binding region (homeobox; TALE-type) is located at residues 291-354 (LRKRRAGKLP…NQRKRNWHSN (64 aa)). Residues 347 to 374 (RKRNWHSNPSSSTSVKTKRKSNAGDNNS) are disordered.

This sequence belongs to the TALE/KNOX homeobox family. Isoforms 1 and 2 are expressed in roots, stems, shoot meristem, leaf blades, leaf sheaths and flowers. Isoform 3 is expressed in stems, shoot meristem, rachis, leaf blades and leaf sheaths.

It is found in the nucleus. Its function is as follows. Isoform 3 acts as a transcription activator, but isoforms 1 and 2 do not. The polypeptide is Homeobox protein knotted-1-like 13 (OSH45) (Oryza sativa subsp. japonica (Rice)).